Consider the following 463-residue polypeptide: MQFRIEHDTMGEIKVNDSQYWGAQTQRSLENFKIGTEKMPKELIGAFAKLKRSLAVVNHKLGKLSLEKSQAIIKACDCILKGELCGEFPLAIWQTGSGTQTNMNLNEVIANKATEILGGNFREKKLIHPNDDVNMSQSSNDTFPTAMHIVSVLEITHRLLPSLENLLKTFKEKSQQFKEIVKIGRTHLQDATPLTLGQEFSGYASMLEHSKQQILESLEHLRELAIGGTAVGTGLNAHKELSEKVAEELSQFSGVKFVSAPNKFHALTSHDAIAYAHGAFKALAANLMKIANDIRWLASGPRCGLGELNIPENEPGSSIMPGKVNPTQCEAMTMVAVQVMGNDTAIGIAASQGNFELNVFKPVIIYNFLQSLRLLSDSMESFNIHCASGIEPNREKIDYYLHHSLMLVTALNPHVGYENAAKIAKNAHKKGISLKESALELKLLSAEDFDKFVVPEKMIGPKA.

Substrate is bound by residues 97–99, 128–131, 138–140, and threonine 186; these read SGT, HPND, and SSN. Catalysis depends on histidine 187, which acts as the Proton donor/acceptor. Serine 317 is an active-site residue. Substrate is bound by residues serine 318 and 323-325; that span reads KVN.

Belongs to the class-II fumarase/aspartase family. Fumarase subfamily. In terms of assembly, homotetramer.

The protein localises to the cytoplasm. The enzyme catalyses (S)-malate = fumarate + H2O. Its pathway is carbohydrate metabolism; tricarboxylic acid cycle; (S)-malate from fumarate: step 1/1. In terms of biological role, involved in the TCA cycle. Catalyzes the stereospecific interconversion of fumarate to L-malate. This chain is Fumarate hydratase class II, found in Helicobacter pylori (strain ATCC 700392 / 26695) (Campylobacter pylori).